Reading from the N-terminus, the 295-residue chain is Protoheme IX farnesyltransferase 2 (295 aa).

The next 9 membrane-spanning stretches (helical) occupy residues 9-29 (ITKP…FFLA), 36-56 (FALF…GCVF), 83-103 (LTLA…LLYV), 108-128 (LSAF…SLWL), 135-155 (GTLV…CAVS), 163-183 (VTLL…IAIF), 209-229 (IVLY…GGYA), 230-250 (GLGY…MAWG), and 264-284 (VFGF…VDSQ).

It belongs to the UbiA prenyltransferase family. Protoheme IX farnesyltransferase subfamily.

The protein localises to the cell inner membrane. It carries out the reaction heme b + (2E,6E)-farnesyl diphosphate + H2O = Fe(II)-heme o + diphosphate. Its pathway is porphyrin-containing compound metabolism; heme O biosynthesis; heme O from protoheme: step 1/1. In terms of biological role, converts heme B (protoheme IX) to heme O by substitution of the vinyl group on carbon 2 of heme B porphyrin ring with a hydroxyethyl farnesyl side group. This chain is Protoheme IX farnesyltransferase 2, found in Pseudomonas putida (strain W619).